The following is a 1438-amino-acid chain: DNA polymerase III PolC-type (1438 aa).

One can recognise an Exonuclease domain in the interval 422–578 (YVVFDVETTG…YDTEATAYIF (157 aa)).

Belongs to the DNA polymerase type-C family. PolC subfamily.

The protein localises to the cytoplasm. It catalyses the reaction DNA(n) + a 2'-deoxyribonucleoside 5'-triphosphate = DNA(n+1) + diphosphate. Its function is as follows. Required for replicative DNA synthesis. This DNA polymerase also exhibits 3' to 5' exonuclease activity. This is DNA polymerase III PolC-type from Staphylococcus aureus (strain bovine RF122 / ET3-1).